The following is a 156-amino-acid chain: Small ribosomal subunit protein uS7 (156 aa).

Belongs to the universal ribosomal protein uS7 family. In terms of assembly, part of the 30S ribosomal subunit. Contacts proteins S9 and S11.

Functionally, one of the primary rRNA binding proteins, it binds directly to 16S rRNA where it nucleates assembly of the head domain of the 30S subunit. Is located at the subunit interface close to the decoding center, probably blocks exit of the E-site tRNA. The sequence is that of Small ribosomal subunit protein uS7 from Colwellia psychrerythraea (strain 34H / ATCC BAA-681) (Vibrio psychroerythus).